Reading from the N-terminus, the 825-residue chain is Phenylalanine--tRNA ligase beta subunit (825 aa).

Positions 39 to 154 (RSWAEGVVLG…KAHPLGSDAR (116 aa)) constitute a tRNA-binding domain. Residues 411–506 (PLERTLKLRL…RLYGYDRFSE (96 aa)) form the B5 domain. Positions 484, 490, 493, and 494 each coordinate Mg(2+). Residues 731-824 (SPFPASDRDI…LEKHFPVTLR (94 aa)) form the FDX-ACB domain.

It belongs to the phenylalanyl-tRNA synthetase beta subunit family. Type 1 subfamily. Tetramer of two alpha and two beta subunits. It depends on Mg(2+) as a cofactor.

It is found in the cytoplasm. It catalyses the reaction tRNA(Phe) + L-phenylalanine + ATP = L-phenylalanyl-tRNA(Phe) + AMP + diphosphate + H(+). This chain is Phenylalanine--tRNA ligase beta subunit, found in Synechococcus sp. (strain JA-3-3Ab) (Cyanobacteria bacterium Yellowstone A-Prime).